Reading from the N-terminus, the 782-residue chain is Coiled-coil alpha-helical rod protein 1 (782 aa).

2 stretches are compositionally biased toward basic and acidic residues: residues 62–74 (ERDV…EPGR) and 208–218 (ETRRAGEAKEL). 2 disordered regions span residues 62–82 (ERDV…WGLE) and 177–218 (EQLS…AKEL). Coiled-coil stretches lie at residues 111 to 303 (LRET…SLTH), 344 to 437 (LMVQ…NAVS), and 498 to 691 (VTDV…QQEG).

Found in all tissues tested, abundantly expressed in heart, liver, skeletal muscle, kidney and pancreas, and to a lesser extent in lung and placenta. Overexpressed in keratinocytes of psoriatic lesions.

The protein resides in the cytoplasm. It localises to the nucleus. May be a regulator of keratinocyte proliferation or differentiation. The sequence is that of Coiled-coil alpha-helical rod protein 1 (CCHCR1) from Homo sapiens (Human).